Reading from the N-terminus, the 222-residue chain is Superoxide dismutase [Cu-Zn], chloroplastic (222 aa).

The N-terminal 68 residues, 1 to 68 (MAAHTILASA…AASKPLTIVA (68 aa)), are a transit peptide targeting the chloroplast. Cu cation is bound by residues H114, H116, and H131. An intrachain disulfide couples C125 to C214. The Zn(2+) site is built by H131, H139, H148, and D151. H188 is a binding site for Cu cation.

It belongs to the Cu-Zn superoxide dismutase family. Homotetramer. It depends on Cu cation as a cofactor. The cofactor is Zn(2+).

Its subcellular location is the plastid. It localises to the chloroplast. It catalyses the reaction 2 superoxide + 2 H(+) = H2O2 + O2. Its function is as follows. Destroys radicals which are normally produced within the cells and which are toxic to biological systems. This is Superoxide dismutase [Cu-Zn], chloroplastic (SODCP) from Spinacia oleracea (Spinach).